Reading from the N-terminus, the 33-residue chain is Protamine TP16 (33 aa).

The interval 1–33 is disordered; sequence MPRRRRSSSRPVRRRRRARVSRRRRRRGRRRRR.

As to expression, testis.

It is found in the nucleus. Its subcellular location is the chromosome. Its function is as follows. Protamines substitute for histones in the chromatin of sperm during the haploid phase of spermatogenesis. They compact sperm DNA into a highly condensed, stable and inactive complex. The protein is Protamine TP16 of Oncorhynchus mykiss (Rainbow trout).